A 427-amino-acid polypeptide reads, in one-letter code: Enolase 2 (427 aa).

Gln165 contacts (2R)-2-phosphoglycerate. The active-site Proton donor is Glu207. The Mg(2+) site is built by Asp244, Glu287, and Asp314. (2R)-2-phosphoglycerate-binding residues include Lys339, Arg368, Ser369, and Lys390. Residue Lys339 is the Proton acceptor of the active site.

This sequence belongs to the enolase family. As to quaternary structure, component of the RNA degradosome, a multiprotein complex involved in RNA processing and mRNA degradation. Mg(2+) serves as cofactor.

The protein resides in the cytoplasm. Its subcellular location is the secreted. The protein localises to the cell surface. It catalyses the reaction (2R)-2-phosphoglycerate = phosphoenolpyruvate + H2O. It functions in the pathway carbohydrate degradation; glycolysis; pyruvate from D-glyceraldehyde 3-phosphate: step 4/5. Catalyzes the reversible conversion of 2-phosphoglycerate (2-PG) into phosphoenolpyruvate (PEP). It is essential for the degradation of carbohydrates via glycolysis. The chain is Enolase 2 from Pseudomonas syringae pv. syringae (strain B728a).